The following is a 304-amino-acid chain: MAATNGASNDFTVKAGLAQMLKGGVIMDVVNAEQARIAEEAGAAAVMALERVPADIRAQGGVARMSDPSMIKEIMEAVTIPVMAKARIGHFVECQILEAIGVDYIDESEVLTPADNLYHVTKHNFKAPFVCGCRNLGEALRRISEGAAMIRTKGEAGTGDVVEAVKHMRTVNAEIARARAILQSSPDPEPELRAYARELEAPYELLREAAEKGRLPVVNFAAGGVATPADAALMMQLGCDGVFVGSGIFKSGDAKKRAKAIVQAVTHYKDPKVLAEVSQGLGEAMVGINVSHMKDEDKLAKRGW.

A D-ribose 5-phosphate-binding site is contributed by D28. Catalysis depends on K85, which acts as the Schiff-base intermediate with D-ribose 5-phosphate. Position 157 (G157) interacts with D-ribose 5-phosphate. Residue R169 participates in D-glyceraldehyde 3-phosphate binding. D-ribose 5-phosphate-binding positions include G224 and 245-246; that span reads GS.

The protein belongs to the PdxS/SNZ family.

It catalyses the reaction aldehydo-D-ribose 5-phosphate + D-glyceraldehyde 3-phosphate + L-glutamine = pyridoxal 5'-phosphate + L-glutamate + phosphate + 3 H2O + H(+). The protein operates within cofactor biosynthesis; pyridoxal 5'-phosphate biosynthesis. Functionally, catalyzes the formation of pyridoxal 5'-phosphate from ribose 5-phosphate (RBP), glyceraldehyde 3-phosphate (G3P) and ammonia. The ammonia is provided by PDX2. Can also use ribulose 5-phosphate and dihydroxyacetone phosphate as substrates, resulting from enzyme-catalyzed isomerization of RBP and G3P, respectively. Also plays an indirect role in resistance to singlet oxygen-generating photosensitizers. This Emericella nidulans (strain FGSC A4 / ATCC 38163 / CBS 112.46 / NRRL 194 / M139) (Aspergillus nidulans) protein is Pyridoxal 5'-phosphate synthase subunit pyroA (pyroA).